Consider the following 234-residue polypeptide: UPF0758 protein Smal_0281 (234 aa).

In terms of domain architecture, MPN spans 103–225 (VGNNPAAVGR…PVSFAERGLL (123 aa)). Zn(2+) contacts are provided by His174, His176, and Asp187. The JAMM motif motif lies at 174-187 (HNHPSGDPEPSSAD).

This sequence belongs to the UPF0758 family.

The sequence is that of UPF0758 protein Smal_0281 from Stenotrophomonas maltophilia (strain R551-3).